Here is a 498-residue protein sequence, read N- to C-terminus: MRINPTTSGSGVSTLEKKNPGRVVQIIGPVLDVAFPPGKMPNIYNALVVQGRDSVGQPINVACEVQQLLGNNRVRAVAMSATDGLTRGMEVIDTGAPISVPVGGATLGRIFNVLGEPVDNLGPVDTSTTSPIHRSAPAFIQLDTKLSIFETGIKVVDLLAPYRRGGKIGLFGGAGVGKTVLIMELINNIAKAHGGVSVFGGVGERTREGNDLYMEMKESGVINEENIAESKVALVYGQMNEPPGARMRVGLTALTMAEYFRDVNEQDVLLFIDNIFRFVQAGSEVSALLGRMPSAVGYQPTLSTEMGSLQERITSTKEGSITSIQAVYVPADDLTDPAPATTFAHLDATTVLSRGLAAKGIYPAVDPLDSTSTMLQPRIVGEEHYETAQRVKQTLQRYKELQDIIAILGLDELSEEDRLLVARARKIERFLSQPFFVAEVFTGSPGKYVGLAETIRGFQLILSGELDGLPEQAFYLVGNIDEATAKAMNLEMESNLKK.

Position 172–179 (172–179 (GGAGVGKT)) interacts with ATP.

It belongs to the ATPase alpha/beta chains family. In terms of assembly, F-type ATPases have 2 components, CF(1) - the catalytic core - and CF(0) - the membrane proton channel. CF(1) has five subunits: alpha(3), beta(3), gamma(1), delta(1), epsilon(1). CF(0) has four main subunits: a(1), b(1), b'(1) and c(9-12).

It is found in the plastid. It localises to the chloroplast thylakoid membrane. It carries out the reaction ATP + H2O + 4 H(+)(in) = ADP + phosphate + 5 H(+)(out). Produces ATP from ADP in the presence of a proton gradient across the membrane. The catalytic sites are hosted primarily by the beta subunits. The protein is ATP synthase subunit beta, chloroplastic of Nicotiana bigelovii (Bigelov's tobacco).